Here is a 266-residue protein sequence, read N- to C-terminus: 3',5'-cyclic-nucleotide phosphodiesterase alr5338 (266 aa).

Fe cation is bound by residues Asp-14, His-16, Asp-56, Asn-86, His-155, His-194, and His-196. AMP contacts are provided by residues His-16, Asp-56, and 86–87; that span reads NH. Position 196 (His-196) interacts with AMP.

The protein belongs to the cyclic nucleotide phosphodiesterase class-III family. It depends on Fe(2+) as a cofactor. Requires Mn(2+) as cofactor.

The catalysed reaction is a nucleoside 3',5'-cyclic phosphate + H2O = a nucleoside 5'-phosphate + H(+). The enzyme catalyses 3',5'-cyclic AMP + H2O = AMP + H(+). It catalyses the reaction 3',5'-cyclic GMP + H2O = GMP + H(+). Its activity is regulated as follows. Activated by iron and manganese. Functionally, hydrolyzes cAMP to 5'-AMP. Plays an important regulatory role in modulating the intracellular concentration of cAMP, thereby influencing cAMP-dependent processes. Can also hydrolyze cGMP. This chain is 3',5'-cyclic-nucleotide phosphodiesterase alr5338, found in Nostoc sp. (strain PCC 7120 / SAG 25.82 / UTEX 2576).